The following is a 509-amino-acid chain: FAD-linked oxidoreductase dpmaF (509 aa).

A signal peptide spans 1–21 (MTRLSLQLIAGLAGQAWLVNS). The 173-residue stretch at 59 to 231 (LQYEPIAVAV…AEYGFETFPA (173 aa)) folds into the FAD-binding PCMH-type domain. N-linked (GlcNAc...) asparagine glycosylation is found at Asn-125, Asn-193, and Asn-281.

Belongs to the oxygen-dependent FAD-linked oxidoreductase family. FAD is required as a cofactor.

Its pathway is secondary metabolite biosynthesis; terpenoid biosynthesis. Its function is as follows. FAD-linked oxidoreductase; part of the gene cluster that mediates the biosynthesis of the diterpenoid pyrones subglutinols A and B. The first step of the pathway is the synthesis of the alpha-pyrone moiety by the polyketide synthase dpmaA via condensation of one acetyl-CoA starter unit with 3 malonyl-CoA units and 2 methylations. The alpha-pyrone is then combined with geranylgeranyl pyrophosphate (GGPP) formed by the GGPP synthase dpmaD through the action of the prenyltransferase dpmaC to yield a linear alpha-pyrone diterpenoid. Subsequent steps in the diterpenoid pyrone biosynthetic pathway involve the decalin core formation, which is initiated by the epoxidation of the C10-C11 olefin by the FAD-dependent oxidoreductase dpmaE, and is followed by a cyclization cascade catalyzed by the terpene cyclase dpmaB. The dehydrogenase dpmaF is then involved in tetrahydrofuran (THF) ring formation at the C5 unit to complete the formation of subglutinols A and B. This chain is FAD-linked oxidoreductase dpmaF, found in Metarhizium anisopliae (Entomophthora anisopliae).